Here is a 91-residue protein sequence, read N- to C-terminus: uncharacterized protein (91 aa).

An N-terminal signal peptide occupies residues 1-21; it reads MKQLLASPSLQLVTYPASATA.

It belongs to the BhsA/McbA family.

The protein resides in the periplasm. This is an uncharacterized protein from Escherichia coli O157:H7.